The following is a 185-amino-acid chain: CASP-like protein SELMODRAFT_413556 (185 aa).

The Cytoplasmic segment spans residues Met1–Lys89. Residues Leu90 to Phe110 traverse the membrane as a helical segment. The Extracellular portion of the chain corresponds to Met111–Ala131. Residues Trp132–Ile152 form a helical membrane-spanning segment. Residues Ser153–Lys163 lie on the Cytoplasmic side of the membrane. Residues Tyr164–Thr184 form a helical membrane-spanning segment. Residue Arg185 is a topological domain, extracellular.

This sequence belongs to the Casparian strip membrane proteins (CASP) family. As to quaternary structure, homodimer and heterodimers.

It localises to the cell membrane. This chain is CASP-like protein SELMODRAFT_413556, found in Selaginella moellendorffii (Spikemoss).